The primary structure comprises 365 residues: 2-aminoethylphosphonate--pyruvate transaminase (365 aa).

N6-(pyridoxal phosphate)lysine is present on Lys194.

It belongs to the class-V pyridoxal-phosphate-dependent aminotransferase family. PhnW subfamily. Homodimer. Requires pyridoxal 5'-phosphate as cofactor.

The catalysed reaction is (2-aminoethyl)phosphonate + pyruvate = phosphonoacetaldehyde + L-alanine. In terms of biological role, involved in phosphonate degradation. This chain is 2-aminoethylphosphonate--pyruvate transaminase, found in Bacillus cereus (strain ATCC 14579 / DSM 31 / CCUG 7414 / JCM 2152 / NBRC 15305 / NCIMB 9373 / NCTC 2599 / NRRL B-3711).